The following is a 407-amino-acid chain: D-3-phosphoglycerate dehydrogenase (407 aa).

NAD(+) is bound by residues 161–162, Asp181, 238–240, and Asp264; these read HI and ASR. Arg240 is a catalytic residue. Glu269 is a catalytic residue. His292 functions as the Proton donor in the catalytic mechanism. 292-295 lines the NAD(+) pocket; the sequence is HIGG. The region spanning 340 to 407 is the ACT domain; sequence RILNIHNNKP…PNSIKTRVLY (68 aa).

The protein belongs to the D-isomer specific 2-hydroxyacid dehydrogenase family.

The catalysed reaction is (2R)-3-phosphoglycerate + NAD(+) = 3-phosphooxypyruvate + NADH + H(+). The enzyme catalyses (R)-2-hydroxyglutarate + NAD(+) = 2-oxoglutarate + NADH + H(+). It functions in the pathway amino-acid biosynthesis; L-serine biosynthesis; L-serine from 3-phospho-D-glycerate: step 1/3. Catalyzes the reversible oxidation of 3-phospho-D-glycerate to 3-phosphonooxypyruvate, the first step of the phosphorylated L-serine biosynthesis pathway. Also catalyzes the reversible oxidation of 2-hydroxyglutarate to 2-oxoglutarate. The polypeptide is D-3-phosphoglycerate dehydrogenase (serA) (Dictyostelium discoideum (Social amoeba)).